Reading from the N-terminus, the 341-residue chain is Phenylalanine--tRNA ligase alpha subunit (341 aa).

Residue E253 participates in Mg(2+) binding.

Belongs to the class-II aminoacyl-tRNA synthetase family. Phe-tRNA synthetase alpha subunit type 1 subfamily. Tetramer of two alpha and two beta subunits. Requires Mg(2+) as cofactor.

It is found in the cytoplasm. The catalysed reaction is tRNA(Phe) + L-phenylalanine + ATP = L-phenylalanyl-tRNA(Phe) + AMP + diphosphate + H(+). The sequence is that of Phenylalanine--tRNA ligase alpha subunit from Methylococcus capsulatus (strain ATCC 33009 / NCIMB 11132 / Bath).